The chain runs to 289 residues: ATP synthase gamma chain (289 aa).

The protein belongs to the ATPase gamma chain family. In terms of assembly, F-type ATPases have 2 components, CF(1) - the catalytic core - and CF(0) - the membrane proton channel. CF(1) has five subunits: alpha(3), beta(3), gamma(1), delta(1), epsilon(1). CF(0) has three main subunits: a, b and c.

It is found in the cell inner membrane. Produces ATP from ADP in the presence of a proton gradient across the membrane. The gamma chain is believed to be important in regulating ATPase activity and the flow of protons through the CF(0) complex. The chain is ATP synthase gamma chain from Coxiella burnetii (strain CbuG_Q212) (Coxiella burnetii (strain Q212)).